The primary structure comprises 146 residues: P antigen family member 1 (146 aa).

The tract at residues 16–146 (YVESSEESSD…PEEDEGQSQP (131 aa)) is disordered. Residues 19–32 (SSEESSDEQPDEVE) show a composition bias toward acidic residues. Ser63 carries the post-translational modification Phosphoserine. The segment covering 79 to 92 (PDTKRVCLRNEEQM) has biased composition (basic and acidic residues). A Phosphoserine modification is found at Ser105. A compositionally biased stretch (basic and acidic residues) spans 107 to 120 (EQVHPKTGCERGDG). At Ser144 the chain carries Phosphoserine.

It belongs to the GAGE family. As to expression, isolated from prostate cancer cell lines; expression associated with progression to androgen insensitive phenotype. Expressed in normal testis and at lower level in normal placenta.

This chain is P antigen family member 1 (PAGE1), found in Homo sapiens (Human).